An 801-amino-acid chain; its full sequence is Phenylalanine--tRNA ligase beta subunit (801 aa).

Positions 39-153 constitute a tRNA-binding domain; the sequence is AEGLSKLVVG…EDAVPGESIF (115 aa). Residues 406–481 enclose the B5 domain; the sequence is TDDIQVSTSL…RIYGYDKLPT (76 aa). 4 residues coordinate Mg(2+): Asp459, Asp465, Glu468, and Glu469. In terms of domain architecture, FDX-ACB spans 708–801; sequence TKFPAVSRDI…LTEKVGAEVR (94 aa).

This sequence belongs to the phenylalanyl-tRNA synthetase beta subunit family. Type 1 subfamily. In terms of assembly, tetramer of two alpha and two beta subunits. Requires Mg(2+) as cofactor.

The protein resides in the cytoplasm. It carries out the reaction tRNA(Phe) + L-phenylalanine + ATP = L-phenylalanyl-tRNA(Phe) + AMP + diphosphate + H(+). This is Phenylalanine--tRNA ligase beta subunit from Streptococcus mutans serotype c (strain ATCC 700610 / UA159).